A 272-amino-acid chain; its full sequence is Transcription factor GAL1 (272 aa).

Positions 1–10 are enriched in polar residues; sequence MAGKNMSSRL. 3 disordered regions span residues 1-49, 102-215, and 246-272; these read MAGK…SPET, YGAI…SRDI, and KGHL…AMDY. Composition is skewed to acidic residues over residues 113–122 and 152–174; these read ESDDDQDEEQ and SEQD…DEAE. Over residues 175–215 the composition is skewed to basic and acidic residues; that stretch reads LLIKAERKEAAAKLRAERKAQRKADEVKSKQMAERRRSRDI. The CCHC-type zinc finger occupies 240–255; it reads CHVCGQKGHLQKDCPD.

The protein resides in the nucleus. In terms of biological role, transcription factor; part of the gene cluster that mediates the biosynthesis of liamocins, glycolipids (also called heavy oils) composed of a single mannitol or arabitol headgroup linked to either three, four or even six 3,5-dihydroxydecanoic ester tail-groups. Positively regulates the expression of PKS1 and EST1 that mediate the biosynthesis of liamocins. This is Transcription factor GAL1 from Aureobasidium melanogenum (Aureobasidium pullulans var. melanogenum).